A 177-amino-acid chain; its full sequence is Glia associated membrane protein glam-1 (177 aa).

3 consecutive transmembrane segments (helical) span residues 19–39 (PLVVGLAVFGAIRSFVQFWMS), 42–62 (FGMAGTHFCVLLLDLLLLFGA), and 76–96 (VTFACVLIAIIRFMIYPVVFA).

Its subcellular location is the membrane. The polypeptide is Glia associated membrane protein glam-1 (Caenorhabditis elegans).